Here is a 286-residue protein sequence, read N- to C-terminus: Putative WUSCHEL-related homeobox 2 (286 aa).

The tract at residues 1-25 (MAPAVQQQQSGGGGGSTGAAAVGST) is disordered. Positions 23–87 (GSTTRWCPTP…NHKARDRQKL (65 aa)) form a DNA-binding region, homeobox; WUS-type.

It belongs to the WUS homeobox family.

It is found in the nucleus. Transcription factor which may be involved in developmental processes. The chain is Putative WUSCHEL-related homeobox 2 (WOX2) from Oryza sativa subsp. japonica (Rice).